Consider the following 249-residue polypeptide: Meiotic drive suppressor wtf25 (249 aa).

The tract at residues 1–40 (MKNNYTSLKSPLDEEDELKTDHEIDLEKGPLPEYDSEEEG) is disordered. Residues 19–30 (KTDHEIDLEKGP) are compositionally biased toward basic and acidic residues. Transmembrane regions (helical) follow at residues 73–93 (LLII…PAFC), 110–130 (WTLF…LTYF), 151–170 (NMIF…LKAE), and 187–207 (SASA…AETV).

This sequence belongs to the WTF family. In terms of assembly, homomer. Interacts with other proteins that exhibit high sequence similarity.

Its subcellular location is the spore membrane. It localises to the vacuole membrane. Its function is as follows. Acts as a suppressor component of the dual wtf meiotic drive system, and can suppress but not confer meiotic drive by compatible poisons. Wtf meiotic drive systems promote unequal transmission of alleles from the parental zygote to progeny spores by encoding a poison and an antidote from the same locus; the poison is trans-acting and forms toxic aggregates in all spores within an ascus, wherease the antidote is spore-specific and targets aggregates for degradation by the vacuole. Meiotic drive by wtf systems therefore lead to poisoning of all progeny that do not inherit the dual poison/antidote allele, or express a compatible antidote. This is Meiotic drive suppressor wtf25 from Schizosaccharomyces pombe (strain 972 / ATCC 24843) (Fission yeast).